The sequence spans 252 residues: MLAKRIIPCLDIKDGRVVKGINFVDLKDAGDPVENAIVYEEQKADEIVFLDITASYEKRNTVIDLAKRVAQNIFTPFTIGGGIRTLDDIRKLLEAGADKVSINSAAVKNPQLIYESARKFGSQCIVVAIDAKHVEDDTWHVYINGGRLNTNLDAVEWAKQVESLGAGEILLTSIDKDGTKSGYDIKLTDLISKAVNIPVIASGGAGRKEHFLEAFKLTEASACLAASIFHFKKISIPALKAYLKENNVHVRI.

Catalysis depends on residues Asp11 and Asp130.

The protein belongs to the HisA/HisF family. Heterodimer of HisH and HisF.

The protein localises to the cytoplasm. It carries out the reaction 5-[(5-phospho-1-deoxy-D-ribulos-1-ylimino)methylamino]-1-(5-phospho-beta-D-ribosyl)imidazole-4-carboxamide + L-glutamine = D-erythro-1-(imidazol-4-yl)glycerol 3-phosphate + 5-amino-1-(5-phospho-beta-D-ribosyl)imidazole-4-carboxamide + L-glutamate + H(+). The protein operates within amino-acid biosynthesis; L-histidine biosynthesis; L-histidine from 5-phospho-alpha-D-ribose 1-diphosphate: step 5/9. Its function is as follows. IGPS catalyzes the conversion of PRFAR and glutamine to IGP, AICAR and glutamate. The HisF subunit catalyzes the cyclization activity that produces IGP and AICAR from PRFAR using the ammonia provided by the HisH subunit. This chain is Imidazole glycerol phosphate synthase subunit HisF, found in Hydrogenobaculum sp. (strain Y04AAS1).